The sequence spans 599 residues: Aspartate--tRNA(Asp/Asn) ligase (599 aa).

An L-aspartate-binding site is contributed by glutamate 169. The aspartate stretch occupies residues 193 to 196 (QLFK). An L-aspartate-binding site is contributed by arginine 215. Residues 215-217 (RDE) and glutamine 224 contribute to the ATP site. Histidine 447 contributes to the L-aspartate binding site. ATP is bound at residue glutamate 481. Arginine 488 is a binding site for L-aspartate. 533–536 (GWDR) is a binding site for ATP.

This sequence belongs to the class-II aminoacyl-tRNA synthetase family. Type 1 subfamily. In terms of assembly, homodimer.

The protein resides in the cytoplasm. It carries out the reaction tRNA(Asx) + L-aspartate + ATP = L-aspartyl-tRNA(Asx) + AMP + diphosphate. Aspartyl-tRNA synthetase with relaxed tRNA specificity since it is able to aspartylate not only its cognate tRNA(Asp) but also tRNA(Asn). Reaction proceeds in two steps: L-aspartate is first activated by ATP to form Asp-AMP and then transferred to the acceptor end of tRNA(Asp/Asn). The polypeptide is Aspartate--tRNA(Asp/Asn) ligase (Pseudarthrobacter chlorophenolicus (strain ATCC 700700 / DSM 12829 / CIP 107037 / JCM 12360 / KCTC 9906 / NCIMB 13794 / A6) (Arthrobacter chlorophenolicus)).